The chain runs to 472 residues: Adenosylhomocysteinase (472 aa).

3 residues coordinate substrate: T62, D137, and E197. NAD(+) is bound at residue 198-200 (TTT). Residues K227 and D231 each coordinate substrate. NAD(+) contacts are provided by residues N232, 261–266 (GYGDVG), E284, N319, 340–342 (IGH), and N385.

It belongs to the adenosylhomocysteinase family. NAD(+) is required as a cofactor.

The protein localises to the cytoplasm. It carries out the reaction S-adenosyl-L-homocysteine + H2O = L-homocysteine + adenosine. Its pathway is amino-acid biosynthesis; L-homocysteine biosynthesis; L-homocysteine from S-adenosyl-L-homocysteine: step 1/1. May play a key role in the regulation of the intracellular concentration of adenosylhomocysteine. This chain is Adenosylhomocysteinase, found in Bordetella petrii (strain ATCC BAA-461 / DSM 12804 / CCUG 43448).